A 402-amino-acid polypeptide reads, in one-letter code: La-related protein 7 homolog (402 aa).

The HTH La-type RNA-binding-like region stretch occupies residues 64-138 (EPLNPDFLSA…FDNSSHMVIR (75 aa)). Residues 148–230 (IPLYDRIIYV…LTRKEWTNRE (83 aa)) form an RRM-like region region. A xRRM-like region region spans residues 288–400 (DFTKNLLTRI…EEEKNYWRML (113 aa)). The xRRM domain occupies 288 to 402 (DFTKNLLTRI…EKNYWRMLKK (115 aa)).

The protein belongs to the LARP7 family. Component of the telomerase holoenzyme complex composed minimally of trt1 and the telomerase RNA template component. Interacts with skp1.

It is found in the chromosome. Its subcellular location is the telomere. It localises to the nucleus. The protein localises to the cytoplasm. Its function is as follows. RNA-binding protein required for assembly of the holoenzyme telomerase ribonucleoprotein (RNP) complex. Specifically binds telomerase RNA ter1 and promotes assembly of ter1 with catalytic subunit trt1. Telomerase is a ribonucleoprotein enzyme essential that copies new telomeric repeats onto chromosome ends and functions to maintain cell division. The polypeptide is La-related protein 7 homolog (Schizosaccharomyces pombe (strain 972 / ATCC 24843) (Fission yeast)).